The primary structure comprises 57 residues: Conotoxin Cal6.39 (57 aa).

An N-terminal signal peptide occupies residues 1–18; the sequence is MSGTTVLLLTCLFLVTMA. Intrachain disulfides connect Cys-22-Cys-36, Cys-29-Cys-46, and Cys-35-Cys-52.

As to expression, expressed by the venom duct.

The protein resides in the secreted. Functionally, probable neurotoxin. This Californiconus californicus (California cone) protein is Conotoxin Cal6.39.